The chain runs to 677 residues: Potassium channel KAT1 (677 aa).

The Cytoplasmic portion of the chain corresponds to 1–63 (MSISWTRNFF…PFNPRYRAWE (63 aa)). The chain crosses the membrane as a helical span at residues 64-84 (MWLVLLVIYSAWICPFQFAFI). Residues 85–90 (TYKKDA) are Extracellular-facing. A helical membrane pass occupies residues 91 to 111 (IFIIDNIVNGFFAIDIILTFF). Residues 112-134 (VAYLDSHSYLLVDSPKKIAIRYL) are Cytoplasmic-facing. A helical membrane pass occupies residues 135-155 (STWFAFDVCSTAPFQPLSLLF). Over 156 to 165 (NYNGSELGFR) the chain is Extracellular. The helical; Voltage-sensor transmembrane segment at 166–186 (ILSMLRLWRLRRVSSLFARLE) threads the bilayer. The Cytoplasmic portion of the chain corresponds to 187–200 (KDIRFNYFWIRCTK). A helical transmembrane segment spans residues 201 to 221 (LISVTLFAIHCAGCFNYLIAD). The Extracellular portion of the chain corresponds to 222–248 (RYPNPRKTWIGAVYPNFKEASLWNRYV). The pore-forming intramembrane region spans 249–268 (TALYWSITTLTTTGYGDFHA). At 269–272 (ENPR) the chain is on the extracellular side. A helical membrane pass occupies residues 273 to 293 (EMLFDIFFMMFNLGLTAYLIG). Over 294-677 (NMTNLVVHWT…DGDHLYFSSN (384 aa)) the chain is Cytoplasmic. 377–496 (LFQGVSRNFL…RVIMNNLFMK (120 aa)) is an a nucleoside 3',5'-cyclic phosphate binding site. Over residues 568–577 (IERAKVERSS) the composition is skewed to basic and acidic residues. The interval 568 to 601 (IERAKVERSSSETAGRSYANDSSKKDPYCSSSNQ) is disordered. A KHA domain is found at 612-677 (RVTIHMMSES…DGDHLYFSSN (66 aa)).

This sequence belongs to the potassium channel family. Plant (TC 1.A.1.4) subfamily. The potassium channel is probably composed of a homo- or heterotetrameric complex of pore-forming subunits. May interact with AKT2 and KAT2. Interacts with SLAC1 and SLAH3. As to expression, expressed in guard cells, and in roots.

The protein resides in the membrane. In terms of biological role, highly selective inward-rectifying potassium channel. This voltage-gated channel could mediate long-term potassium influx into guard cells leading to stomatal opening. Assuming opened or closed conformations in response to the voltage difference across the membrane, the channel is activated by hyperpolarization. The channel activity is enhanced upon external acidification. Also permeable to ammonium ions. Blocked by tetraethylammonium and barium ions. The polypeptide is Potassium channel KAT1 (KAT1) (Arabidopsis thaliana (Mouse-ear cress)).